The sequence spans 179 residues: Calcineurin subunit B type 2 (179 aa).

Gly-2 carries N-myristoyl glycine lipidation. 4 EF-hand domains span residues 18-53 (EEIR…QQNP), 57-85 (RVID…FSVK), 87-122 (DEEQ…MVGN), and 128-163 (QLQQ…MEIH). The Ca(2+) site is built by Asp-31, Asp-33, Ser-35, Ser-37, Glu-42, Asp-63, Asp-65, Asn-67, Glu-69, Glu-74, Asp-100, Asp-102, Asp-104, and Glu-111. The segment at 131-136 (QLVDKS) is calcineurin A binding. Ca(2+) contacts are provided by Asp-141, Asp-143, Asp-145, Arg-147, and Glu-152.

Belongs to the calcineurin regulatory subunit family. As to quaternary structure, forms a complex composed of a calmodulin-dependent catalytic subunit (also known as calcineurin A) and a regulatory Ca(2+)-binding subunit (also known as calcineurin B). There are three catalytic subunits, each encoded by a separate gene (PPP3CA, PPP3CB, and PPP3CC) and two regulatory subunits which are also encoded by separate genes (PPP3R1 and PPP3R2). Interacts with SPATA33 (via PQIIIT motif). In terms of tissue distribution, expressed in osteoblasts and bone marrow (at protein level). Expressed in the testis. Expressed in the sperm midpiece in a SPATA33-dependent manner (at protein level).

It is found in the mitochondrion. Regulatory subunit of calcineurin, a calcium-dependent, calmodulin stimulated protein phosphatase. Confers calcium sensitivity. The polypeptide is Calcineurin subunit B type 2 (Ppp3r2) (Mus musculus (Mouse)).